Reading from the N-terminus, the 889-residue chain is Cytoplasmic aconitate hydratase (889 aa).

Substrate is bound by residues Gln86 and 205 to 207 (DSH). The [4Fe-4S] cluster site is built by Cys437, Cys503, and Cys506. Substrate is bound by residues Arg536 and Arg541. Phosphothreonine is present on Thr628. Substrate-binding positions include Arg699 and 779–780 (SR).

It belongs to the aconitase/IPM isomerase family. As to quaternary structure, interacts (when associated with the 4Fe-4S) with FBXL5. Interacts with frataxin(81-210). [4Fe-4S] cluster is required as a cofactor.

Its subcellular location is the cytoplasm. The protein localises to the cytosol. It catalyses the reaction citrate = D-threo-isocitrate. Its function is as follows. Bifunctional iron sensor that switches between 2 activities depending on iron availability. Iron deprivation, promotes its mRNA binding activity through which it regulates the expression of genes involved in iron uptake, sequestration and utilization. Binds to iron-responsive elements (IRES) in the untranslated region of target mRNAs preventing for instance the translation of ferritin and aminolevulinic acid synthase and stabilizing the transferrin receptor mRNA. Conversely, when cellular iron levels are high, binds a 4Fe-4S cluster which precludes RNA binding activity and promotes the aconitase activity, the isomerization of citrate to isocitrate via cis-aconitate. The sequence is that of Cytoplasmic aconitate hydratase (ACO1) from Homo sapiens (Human).